The primary structure comprises 172 residues: uncharacterized protein (172 aa).

This is an uncharacterized protein from Bacillus subtilis (strain 168).